Reading from the N-terminus, the 97-residue chain is Co-chaperonin GroES (97 aa).

The protein belongs to the GroES chaperonin family. As to quaternary structure, heptamer of 7 subunits arranged in a ring. Interacts with the chaperonin GroEL.

It localises to the cytoplasm. Its function is as follows. Together with the chaperonin GroEL, plays an essential role in assisting protein folding. The GroEL-GroES system forms a nano-cage that allows encapsulation of the non-native substrate proteins and provides a physical environment optimized to promote and accelerate protein folding. GroES binds to the apical surface of the GroEL ring, thereby capping the opening of the GroEL channel. This chain is Co-chaperonin GroES, found in Burkholderia vietnamiensis.